A 98-amino-acid chain; its full sequence is Protein S100-A13 (98 aa).

One can recognise an EF-hand domain in the interval 18 to 53; that stretch reads TTFFTFARQEGRKDSLSVNEFKELVTQQLPHLLKDV. 7 residues coordinate Ca(2+): Ser-32, Glu-37, Asp-64, Asn-66, Asp-68, Glu-70, and Glu-75. Ser-32 carries the phosphoserine modification.

Belongs to the S-100 family. As to quaternary structure, homodimer. Part of a copper-dependent multiprotein complex containing S100A13, FGF1 and SYT1. Interacts with FGF1 and SYT1. Interacts with IL1A. As to expression, expressed in heart and skeletal muscle.

It localises to the cytoplasm. Its subcellular location is the secreted. In terms of biological role, plays a role in the export of proteins that lack a signal peptide and are secreted by an alternative pathway. Binds two calcium ions per subunit. Binds one copper ion. Binding of one copper ion does not interfere with calcium binding. Required for the copper-dependent stress-induced export of IL1A and FGF1. The calcium-free protein binds to lipid vesicles containing phosphatidylserine, but not to vesicles containing phosphatidylcholine. The sequence is that of Protein S100-A13 (S100A13) from Homo sapiens (Human).